The primary structure comprises 972 residues: Mast/stem cell growth factor receptor Kit (972 aa).

The first 25 residues, 1–25 (MRGARGAWDFLCVLLLLLRVQTGSS), serve as a signal peptide directing secretion. The Extracellular segment spans residues 26–520 (QPSVSPEEAS…QIQPHTLFTP (495 aa)). Ig-like C2-type domains follow at residues 27–112 (PSVS…VFVR), 121–205 (DRSL…LKVR), 212–308 (PVVS…LEVV), 317–410 (PMIN…VYVN), and 413–507 (PEIL…FNFA). A disulfide bond links C58 and C97. 2 N-linked (GlcNAc...) asparagine glycosylation sites follow: N130 and N145. Cystine bridges form between C136–C186, C151–C183, and C233–C290. N-linked (GlcNAc...) asparagine glycosylation is found at N283, N300, N320, N352, N367, N463, and N486. C428 and C491 are oxidised to a cystine. The chain crosses the membrane as a helical span at residues 521 to 541 (LLIGFVVVAGMMCIIVMILTY). Residues 542–972 (KYLQKPMYEV…SQPLLVRDDV (431 aa)) are Cytoplasmic-facing. Residues Y543 and Y549 each carry the phosphotyrosine modification. A Mg(2+)-binding site is contributed by Y564. Y564 and Y566 each carry phosphotyrosine; by autocatalysis. The interval 564 to 566 (YVY) is important for interaction with phosphotyrosine-binding proteins. Residues 585–933 (LSFGKTLGAG…ISESTNHIYS (349 aa)) enclose the Protein kinase domain. ATP-binding positions include 592–599 (GAGAFGKV), K619, and 667–673 (EYCCYGD). 2 positions are modified to phosphotyrosine; by autocatalysis: Y699 and Y717. Y726 is modified (phosphotyrosine). Phosphoserine; by PKC/PRKCA is present on residues S737 and S742. D788 serves as the catalytic Proton acceptor. R792 provides a ligand contact to ATP. Positions 793 and 806 each coordinate Mg(2+). At S817 the chain carries Phosphoserine. Y819 carries the post-translational modification Phosphotyrosine; by autocatalysis. S887 is modified (phosphoserine). A Phosphotyrosine modification is found at Y896. Residue Y932 is modified to Phosphotyrosine; by autocatalysis. Residue S955 is modified to Phosphoserine.

This sequence belongs to the protein kinase superfamily. Tyr protein kinase family. CSF-1/PDGF receptor subfamily. In terms of assembly, monomer in the absence of bound KITLG/SCF. Homodimer in the presence of bound KITLG/SCF, forming a heterotetramer with two KITLG/SCF molecules. Interacts (via phosphorylated tyrosine residues) with the adapter proteins GRB2 and GRB7 (via SH2 domain), and SH2B2/APS. Interacts (via C-terminus) with MPDZ (via the tenth PDZ domain). Interacts (via phosphorylated tyrosine residues) with PIK3R1 and PIK3CD. Interacts (via phosphorylated tyrosine) with CRK (isoform Crk-II), FYN, SHC1 and MATK/CHK (via SH2 domain). Interacts with LYN and FES/FPS. Interacts (via phosphorylated tyrosine residues) with the protein phosphatases PTPN6/SHP-1 (via SH2 domain), PTPN11/SHP-2 (via SH2 domain) and PTPRU. Interacts with PLCG1. Interacts with DOK1 and TEC. Interacts with IL1RAP (independent of stimulation with KITLG/SCF). A mast cell-specific KITLG/SCF-induced interleukin-33 signaling complex contains IL1RL1, IL1RAP, KIT and MYD88. In terms of processing, ubiquitinated by SOCS6. KIT is rapidly ubiquitinated after autophosphorylation induced by KITLG/SCF binding, leading to internalization and degradation. Post-translationally, autophosphorylated on tyrosine residues. KITLG/SCF binding promotes autophosphorylation. Phosphorylated tyrosine residues are important for interaction with specific binding partners.

The protein localises to the cell membrane. The catalysed reaction is L-tyrosyl-[protein] + ATP = O-phospho-L-tyrosyl-[protein] + ADP + H(+). Its activity is regulated as follows. Present in an inactive conformation in the absence of bound ligand. KITLG/SCF binding leads to dimerization and activation by autophosphorylation on tyrosine residues. Activity is down-regulated by PRKCA-mediated phosphorylation on serine residues. In terms of biological role, tyrosine-protein kinase that acts as a cell-surface receptor for the cytokine KITLG/SCF and plays an essential role in the regulation of cell survival and proliferation, hematopoiesis, stem cell maintenance, gametogenesis, mast cell development, migration and function, and in melanogenesis. In response to KITLG/SCF binding, KIT can activate several signaling pathways. Phosphorylates PIK3R1, PLCG1, SH2B2/APS and CBL. Activates the AKT1 signaling pathway by phosphorylation of PIK3R1, the regulatory subunit of phosphatidylinositol 3-kinase. Activated KIT also transmits signals via GRB2 and activation of RAS, RAF1 and the MAP kinases MAPK1/ERK2 and/or MAPK3/ERK1. Promotes activation of STAT family members STAT1, STAT3, STAT5A and STAT5B. Activation of PLCG1 leads to the production of the cellular signaling molecules diacylglycerol and inositol 1,4,5-trisphosphate. KIT signaling is modulated by protein phosphatases, and by rapid internalization and degradation of the receptor. Activated KIT promotes phosphorylation of the protein phosphatases PTPN6/SHP-1 and PTPRU, and of the transcription factors STAT1, STAT3, STAT5A and STAT5B. Promotes phosphorylation of PIK3R1, CBL, CRK (isoform Crk-II), LYN, MAPK1/ERK2 and/or MAPK3/ERK1, PLCG1, SRC and SHC1. The protein is Mast/stem cell growth factor receptor Kit (KIT) of Callithrix jacchus (White-tufted-ear marmoset).